The primary structure comprises 1158 residues: Phospholipid-transporting ATPase 1 (1158 aa).

Residues Met-1–Pro-15 are compositionally biased toward basic and acidic residues. Residues Met-1 to Asn-30 form a disordered region. Residues Met-1–Leu-100 lie on the Cytoplasmic side of the membrane. The chain crosses the membrane as a helical span at residues Pro-101–Leu-122. Topologically, residues Asn-123 to Gln-127 are extracellular. A helical membrane pass occupies residues Leu-128 to Lys-150. Over Asp-151–Glu-329 the chain is Cytoplasmic. The chain crosses the membrane as a helical span at residues Ile-330–Trp-351. The Extracellular portion of the chain corresponds to Leu-352–Thr-391. The helical transmembrane segment at Phe-392–Ile-409 threads the bilayer. At Ser-410–Gly-914 the chain is on the cytoplasmic side. The active-site 4-aspartylphosphate intermediate is Asp-457. Positions 859 and 863 each coordinate Mg(2+). Residues Tyr-915–Tyr-934 form a helical membrane-spanning segment. Residues Val-935–Glu-948 lie on the Extracellular side of the membrane. Residues Trp-949–Ile-968 form a helical membrane-spanning segment. Residues Leu-969–Leu-998 lie on the Cytoplasmic side of the membrane. Residues Phe-999 to Ala-1020 traverse the membrane as a helical segment. The Extracellular segment spans residues Tyr-1021–Asp-1027. A helical transmembrane segment spans residues Thr-1028–Asp-1050. Residues Val-1051 to Trp-1056 are Cytoplasmic-facing. A helical membrane pass occupies residues Ile-1057 to Asp-1077. At Val-1078–Gln-1090 the chain is on the extracellular side. The chain crosses the membrane as a helical span at residues Val-1091–Ile-1115. Over Lys-1116–Arg-1158 the chain is Cytoplasmic.

This sequence belongs to the cation transport ATPase (P-type) (TC 3.A.3) family. Type IV subfamily. In terms of tissue distribution, expressed in roots, flowers, anthers, leaves, vascular tissues and stems.

It localises to the endoplasmic reticulum membrane. The protein resides in the cell membrane. It carries out the reaction ATP + H2O + phospholipidSide 1 = ADP + phosphate + phospholipidSide 2.. In terms of biological role, involved in transport of phospholipids. Contributes to transmembrane flipping of lipids. Has activity with phosphatidylserine and with a much lower efficiency with phosphatidylethanolamine, but not with phosphatidylcholine. The polypeptide is Phospholipid-transporting ATPase 1 (Arabidopsis thaliana (Mouse-ear cress)).